The following is a 126-amino-acid chain: MDKTLKFTESHEWVRDNGDGTVTIGISEHAQEMLGDVVFVELPELEAEIEAGESFSLVESVKAASDIYAPVTGEVVEVNEELSDSPELINEEPYEGGWIVKVKLSDPSELDNLKDAEEYLNSIEED.

Residues 21-103 (TVTIGISEHA…YEGGWIVKVK (83 aa)) enclose the Lipoyl-binding domain. The residue at position 62 (lysine 62) is an N6-lipoyllysine.

This sequence belongs to the GcvH family. As to quaternary structure, the glycine cleavage system is composed of four proteins: P, T, L and H. (R)-lipoate is required as a cofactor.

Functionally, the glycine cleavage system catalyzes the degradation of glycine. The H protein shuttles the methylamine group of glycine from the P protein to the T protein. The sequence is that of Glycine cleavage system H protein from Vibrio vulnificus (strain CMCP6).